We begin with the raw amino-acid sequence, 391 residues long: Multidrug resistance protein MdtL (391 aa).

The next 12 membrane-spanning stretches (helical) occupy residues 4-24, 42-62, 69-89, 93-113, 131-151, 158-178, 203-222, 245-265, 269-289, 293-313, 331-351, and 356-376; these read FLICSFALVLLYPAGIDMYLV, IAFSVYLAGMAAAMLFAGKVA, PVAIPGAALFIIASVFCSLAE, LFLAGRFLQGLGAGCCYVVAF, LLNGITCIIPVLAPVLGHLIM, SLFWAMAMMGIAVLMLSLFIL, FFLSRVVITTLSVSVILTFV, ALTAGVSMTVSFSTPFALGIF, TLMITSQVLFLAAGITLAVSP, VSLFGITLICAGFSVGFGVAM, LGIAQVCGSSLWIWLAAVVGI, and MLIGILIACSIVSLLLIMFVA.

It belongs to the major facilitator superfamily. DHA1 family. MdtL (TC 2.A.1.2.22) subfamily.

Its subcellular location is the cell inner membrane. Its function is as follows. Confers resistance to chloramphenicol. This Escherichia coli (strain 55989 / EAEC) protein is Multidrug resistance protein MdtL.